A 407-amino-acid chain; its full sequence is Peptidase T (407 aa).

Histidine 82 is a binding site for Zn(2+). The active site involves aspartate 84. Aspartate 143 is a Zn(2+) binding site. Residue glutamate 177 is the Proton acceptor of the active site. Zn(2+) contacts are provided by glutamate 178, aspartate 200, and histidine 382.

The protein belongs to the peptidase M20B family. Zn(2+) serves as cofactor.

It is found in the cytoplasm. The catalysed reaction is Release of the N-terminal residue from a tripeptide.. In terms of biological role, cleaves the N-terminal amino acid of tripeptides. The sequence is that of Peptidase T from Streptococcus uberis (strain ATCC BAA-854 / 0140J).